The following is a 222-amino-acid chain: Large ribosomal subunit protein uL4 (222 aa).

The segment at 50–72 (TRGRSEVSHSTKKPFRQKGTGNA) is disordered.

This sequence belongs to the universal ribosomal protein uL4 family. In terms of assembly, part of the 50S ribosomal subunit.

One of the primary rRNA binding proteins, this protein initially binds near the 5'-end of the 23S rRNA. It is important during the early stages of 50S assembly. It makes multiple contacts with different domains of the 23S rRNA in the assembled 50S subunit and ribosome. Functionally, forms part of the polypeptide exit tunnel. The polypeptide is Large ribosomal subunit protein uL4 (Chlamydia trachomatis serovar A (strain ATCC VR-571B / DSM 19440 / HAR-13)).